Consider the following 432-residue polypeptide: Glutamyl-tRNA reductase (432 aa).

Substrate is bound by residues 50–53, S110, 115–117, and Q121; these read TCNR and ETQ. C51 functions as the Nucleophile in the catalytic mechanism. An NADP(+)-binding site is contributed by 190–195; it reads GAGEMS.

The protein belongs to the glutamyl-tRNA reductase family. In terms of assembly, homodimer.

It carries out the reaction (S)-4-amino-5-oxopentanoate + tRNA(Glu) + NADP(+) = L-glutamyl-tRNA(Glu) + NADPH + H(+). The protein operates within porphyrin-containing compound metabolism; protoporphyrin-IX biosynthesis; 5-aminolevulinate from L-glutamyl-tRNA(Glu): step 1/2. Catalyzes the NADPH-dependent reduction of glutamyl-tRNA(Glu) to glutamate 1-semialdehyde (GSA). The chain is Glutamyl-tRNA reductase from Aliarcobacter butzleri (strain RM4018) (Arcobacter butzleri).